A 204-amino-acid polypeptide reads, in one-letter code: MEGSSRDLVEKFVSKKLSQNEACRKFSNNPNPMPYLMEPSTSERPGEGATQGIVEEEVLQALLEATEEFELRYQRAFSDLTSQLHITQDTAQQSFQQVMGELFRDGTNWGRIVAFFSFGRALCVESANKEMTDLLPRIVQWMVNYLEHTLQPWMQENGGWEAFVGLYGKNAAAQSRESQERFGRLLTIVMLTGVFALVCYMRRR.

The BH1 motif lies at 101–120 (ELFRDGTNWGRIVAFFSFGR). Positions 152–167 (PWMQENGGWEAFVGLY) match the BH2 motif. A helical transmembrane segment spans residues 181 to 198 (RFGRLLTIVMLTGVFALV).

This sequence belongs to the Bcl-2 family.

It is found in the membrane. In terms of biological role, confers strong protection against cell death. This chain is Apoptosis regulator R11, found in Xenopus laevis (African clawed frog).